The sequence spans 304 residues: Porphobilinogen deaminase (304 aa).

Cys-241 bears the S-(dipyrrolylmethanemethyl)cysteine mark.

This sequence belongs to the HMBS family. In terms of assembly, monomer. Requires dipyrromethane as cofactor.

It carries out the reaction 4 porphobilinogen + H2O = hydroxymethylbilane + 4 NH4(+). The protein operates within porphyrin-containing compound metabolism; protoporphyrin-IX biosynthesis; coproporphyrinogen-III from 5-aminolevulinate: step 2/4. Tetrapolymerization of the monopyrrole PBG into the hydroxymethylbilane pre-uroporphyrinogen in several discrete steps. This is Porphobilinogen deaminase from Vesicomyosocius okutanii subsp. Calyptogena okutanii (strain HA).